Reading from the N-terminus, the 715-residue chain is Fatty acid oxidation complex subunit alpha (715 aa).

Residues 1–190 (MTTTSAFMLN…KAGLVDDVVP (190 aa)) form an enoyl-CoA hydratase region. The segment at 306–715 (GPLNSVGILG…WTNGETDQGN (410 aa)) is 3-hydroxyacyl-CoA dehydrogenase.

This sequence in the N-terminal section; belongs to the enoyl-CoA hydratase/isomerase family. The protein in the central section; belongs to the 3-hydroxyacyl-CoA dehydrogenase family. Heterotetramer of two alpha chains (FadJ) and two beta chains (FadI).

It is found in the cytoplasm. It catalyses the reaction a (3S)-3-hydroxyacyl-CoA = a (2E)-enoyl-CoA + H2O. It carries out the reaction a 4-saturated-(3S)-3-hydroxyacyl-CoA = a (3E)-enoyl-CoA + H2O. The enzyme catalyses a (3S)-3-hydroxyacyl-CoA + NAD(+) = a 3-oxoacyl-CoA + NADH + H(+). The catalysed reaction is (3S)-3-hydroxybutanoyl-CoA = (3R)-3-hydroxybutanoyl-CoA. It participates in lipid metabolism; fatty acid beta-oxidation. In terms of biological role, catalyzes the formation of a hydroxyacyl-CoA by addition of water on enoyl-CoA. Also exhibits 3-hydroxyacyl-CoA epimerase and 3-hydroxyacyl-CoA dehydrogenase activities. This Salmonella gallinarum (strain 287/91 / NCTC 13346) protein is Fatty acid oxidation complex subunit alpha.